A 254-amino-acid chain; its full sequence is Demethylmenaquinone methyltransferase (254 aa).

Residues threonine 62, aspartate 80, 122-123 (DG), and serine 139 contribute to the S-adenosyl-L-methionine site.

Belongs to the class I-like SAM-binding methyltransferase superfamily. MenG/UbiE family.

The catalysed reaction is a 2-demethylmenaquinol + S-adenosyl-L-methionine = a menaquinol + S-adenosyl-L-homocysteine + H(+). It functions in the pathway quinol/quinone metabolism; menaquinone biosynthesis; menaquinol from 1,4-dihydroxy-2-naphthoate: step 2/2. Its function is as follows. Methyltransferase required for the conversion of demethylmenaquinol (DMKH2) to menaquinol (MKH2). This Parafrankia sp. (strain EAN1pec) protein is Demethylmenaquinone methyltransferase.